The primary structure comprises 422 residues: MSEFNFISRLHNRGLISHITNEDNLSKLIENKSISLYCGFDPTEESLHIGHLLPLIMLKRFQIAGHRPIILIGGATSLIGDPSFKEKERVFNSNYNVNIWTEKITKQISCFLDFNCGKNSAVLLNNNTWFKQINILSFLRDVGKYFSVNTMINRAAVKQRITRPDQGISFTEFSYNLLQAYDFFILNQQYQADLQIGGADQWGNISSGMHLIHRKTKRVVYGLTVPLLIQSNGIKFGKTESGTIWLDSNKTSPYKFYQFWMNIEDANVYYFLKLFTFIKVSEINKLEKNKNIKNQIINDKSLLAKHITQLVHGKEKLLAAERITKFLFLKNTTHIEESDLQQLKQDGIPFIEVSNVKDLQEALVLTSLAQSRTQAKNMIISNSISINTEKIRKNHIFHEKDKLFGKFTLLSRGKKQHSLLCW.

L-tyrosine is bound at residue Tyr37. Residues 42-51 (PTEESLHIGH) carry the 'HIGH' region motif. 2 residues coordinate L-tyrosine: Tyr175 and Gln179. The 'KMSKS' region signature appears at 235-239 (KFGKT). Position 238 (Lys238) interacts with ATP. The 58-residue stretch at 357 to 414 (KDLQEALVLTSLAQSRTQAKNMIISNSISINTEKIRKNHIFHEKDKLFGKFTLLSRGK) folds into the S4 RNA-binding domain.

This sequence belongs to the class-I aminoacyl-tRNA synthetase family. TyrS type 1 subfamily. As to quaternary structure, homodimer.

The protein resides in the cytoplasm. The catalysed reaction is tRNA(Tyr) + L-tyrosine + ATP = L-tyrosyl-tRNA(Tyr) + AMP + diphosphate + H(+). In terms of biological role, catalyzes the attachment of tyrosine to tRNA(Tyr) in a two-step reaction: tyrosine is first activated by ATP to form Tyr-AMP and then transferred to the acceptor end of tRNA(Tyr). The chain is Tyrosine--tRNA ligase from Buchnera aphidicola subsp. Acyrthosiphon pisum (strain APS) (Acyrthosiphon pisum symbiotic bacterium).